A 374-amino-acid chain; its full sequence is Nudix hydrolase 20, chloroplastic (374 aa).

Residues methionine 1 to serine 49 constitute a chloroplast transit peptide. One can recognise a Nudix hydrolase domain in the interval glycine 205–aspartate 346. The Nudix box signature appears at glycine 244 to glycine 265. Mg(2+)-binding residues include glutamate 259 and glutamate 263.

The protein belongs to the Nudix hydrolase family. The cofactor is Mg(2+). Mn(2+) is required as a cofactor. As to expression, expressed in leaves and inflorescences.

The protein localises to the plastid. It localises to the chloroplast. Probably mediates the hydrolysis of some nucleoside diphosphate derivatives. The polypeptide is Nudix hydrolase 20, chloroplastic (NUDT20) (Arabidopsis thaliana (Mouse-ear cress)).